The sequence spans 458 residues: Argininosuccinate lyase (458 aa).

This sequence belongs to the lyase 1 family. Argininosuccinate lyase subfamily.

Its subcellular location is the cytoplasm. It carries out the reaction 2-(N(omega)-L-arginino)succinate = fumarate + L-arginine. It functions in the pathway amino-acid biosynthesis; L-arginine biosynthesis; L-arginine from L-ornithine and carbamoyl phosphate: step 3/3. This chain is Argininosuccinate lyase, found in Actinobacillus pleuropneumoniae serotype 7 (strain AP76).